Reading from the N-terminus, the 393-residue chain is Protein TsgA (393 aa).

The next 12 helical transmembrane spans lie at 11–31, 51–71, 78–98, 101–121, 134–154, 162–182, 206–226, 245–265, 273–293, 297–317, 332–352, and 361–381; these read WISF…GMVM, FLNA…EIVP, FGFL…SLAL, AAMF…TFLI, LLFT…IAAF, WYWV…LTFG, IGVL…LGFI, TLVS…SFIL, ILTV…TGTP, AWSI…IITL, FVLT…GPIV, and LLTA…LGFV.

Belongs to the major facilitator superfamily. TsgA family.

Its subcellular location is the cell inner membrane. This is Protein TsgA from Escherichia coli O7:K1 (strain IAI39 / ExPEC).